A 260-amino-acid chain; its full sequence is 3'-5' ssDNA/RNA exonuclease TatD (260 aa).

The a divalent metal cation site is built by E91, H127, and H152.

This sequence belongs to the metallo-dependent hydrolases superfamily. TatD-type hydrolase family. TatD subfamily. In terms of assembly, monomer. The cofactor is Mg(2+).

The protein resides in the cytoplasm. In terms of biological role, 3'-5' exonuclease that prefers single-stranded DNA and RNA. May play a role in the H(2)O(2)-induced DNA damage repair. The sequence is that of 3'-5' ssDNA/RNA exonuclease TatD from Shigella flexneri serotype 5b (strain 8401).